The sequence spans 224 residues: Urease accessory protein UreF (224 aa).

This sequence belongs to the UreF family. As to quaternary structure, ureD, UreF and UreG form a complex that acts as a GTP-hydrolysis-dependent molecular chaperone, activating the urease apoprotein by helping to assemble the nickel containing metallocenter of UreC. The UreE protein probably delivers the nickel.

It is found in the cytoplasm. Its function is as follows. Required for maturation of urease via the functional incorporation of the urease nickel metallocenter. This Ectopseudomonas mendocina (strain ymp) (Pseudomonas mendocina) protein is Urease accessory protein UreF.